We begin with the raw amino-acid sequence, 177 residues long: Coatomer subunit zeta-1 (177 aa).

Met1 is subject to N-acetylmethionine.

Belongs to the adaptor complexes small subunit family. Oligomeric complex that consists of at least the alpha, beta, beta', gamma, delta, epsilon and zeta subunits.

The protein resides in the cytoplasm. Its subcellular location is the golgi apparatus membrane. It localises to the cytoplasmic vesicle. It is found in the COPI-coated vesicle membrane. The coatomer is a cytosolic protein complex that binds to dilysine motifs and reversibly associates with Golgi non-clathrin-coated vesicles, which further mediate biosynthetic protein transport from the ER, via the Golgi up to the trans Golgi network. Coatomer complex is required for budding from Golgi membranes, and is essential for the retrograde Golgi-to-ER transport of dilysine-tagged proteins. The zeta subunit may be involved in regulating the coat assembly and, hence, the rate of biosynthetic protein transport due to its association-dissociation properties with the coatomer complex. This chain is Coatomer subunit zeta-1 (COPZ1), found in Homo sapiens (Human).